Here is a 132-residue protein sequence, read N- to C-terminus: Large ribosomal subunit protein bL17 (132 aa).

It belongs to the bacterial ribosomal protein bL17 family. Part of the 50S ribosomal subunit. Contacts protein L32.

This Shewanella woodyi (strain ATCC 51908 / MS32) protein is Large ribosomal subunit protein bL17.